Reading from the N-terminus, the 986-residue chain is MKIYSYNELKTRFAEYAKPGEFSITSADTFRIIRLHYDEKQGCLFAFCNTNIEKRVLQFYFKVKLNLYSYKQCYDKHIFPSCRNKCISYTTFVAPGVEGNCLNKINVIKYERNKAAPSDNAACLDKFLHNVNRVHMQTPFVEGAYMRFKKTQRCQNNYVGGSTTRMFNLQHFYEDFELVDEMTLTSGIMPVLSCYDIETHSDGHNMSKASVDCIMSIGFVVYKNDEYARFCFMYHKLPTEIPETHDDDTHVVMFQNEVDMITAFFDMIKITNPDVILDFNGDVFDLPYILGRLNKTKMLLKRYDLPAAAPTTKLFINKLGNKVDTYYFNYYIHIDLYKFFSSDSNQHKVENFQLNTISSYYLGENKIDLPWTEMVKMYNTRRLDVIAKYNVQDCMLPIKLFVKLKMADSVYSQCILHRLCTDDVICNISHLISVACFYAAITNTRINESTGKEEPDPYFFNKNDLSIISGQFNADKATAGISNLKRKLTPLKNIPKDAINLGPANQTVKYKGGKVLQPRASIYKNAFSLDFNSLYLTIMIAICACLSNLVLCEDGNVYLNHNSRAIVVKLLLKLLSERCKFKKNRDNQSESAFLYDLYDQKQNSVKRTANSIYGYYGIFYKVLANYITRVGRNQLRRAISLIEGLSNDPEILKKFNLNSIGFKVVYGDTDSTFVLPTFNYNEIFDETDTLKQICTHVETRVNSSFTDGYKMAFENLMKVLIILKKKKYCYLNSENKIVYKGWLVKKDMPVFMRIAFRTAVEQILRHLDINKCLQSLQASFYEYYDEFAKSKPMTDYSFSMTYNDNPGKKRKSADDNNEGPSPKRRVITVARHCREILVNKGTDFVPGNGDRIPYLLIDIEGKVTEKAYPLRLFDPVKMRISWIKHMGILCTFMNELLEIFGDEQKDNLAKCFTAIMQKYMQNQLYDRKEPVLVKINQKKCSVKRKRDDDDDNNDDDDDDGCDSSDSENDTQCANNTYKFCLYKIKK.

Disordered regions lie at residues 804 to 824 (DNPG…SPKR) and 944 to 969 (RKRD…SEND). A compositionally biased stretch (acidic residues) spans 948-968 (DDDDNNDDDDDDGCDSSDSEN).

The protein belongs to the DNA polymerase type-B family.

The catalysed reaction is DNA(n) + a 2'-deoxyribonucleoside 5'-triphosphate = DNA(n+1) + diphosphate. In terms of biological role, replicates the viral genome, host DNA polymerases cannot substitute for the viral enzyme in this process. This Bombyx mori (Silk moth) protein is DNA polymerase (POL).